Here is a 487-residue protein sequence, read N- to C-terminus: MDINVAQLFQTINLNVIMPEVILSVLGMALLLVNVFVPSKSKGYLAWLSLIGIVGAGFAAVTGWGTTVSSFSDSVVLDNFAIFFKIIFLLAAGLAVLISDQYMSREECNHGELYPIILFTTVGMMLMAAATDLMTIFLGLELMSISLYVLAGFNRDSIKSNEAGMKYFLLGAFSTGFLLYGMALIYGVTGTTRVAKIASLVTQVGGASNTMLLIGMFLMLTGFLFKIAAAPFHMWTPDVYEGAPTPMTAFMSAGPKAAGFAAMLRLLLVAFPAMIADWSDLLWILAVLTMTVGNFTALRQDNIKRMLAYSSIAHAGYCLVGFASGTATGTSGILFYMLSYTFMNIGAFAVIVLVGKKGEPNGTVMDYAGLGHKRPLLALAMTVFMFSLAGMPPTAGFIGKFYLFSGAVQAGYIWLAIIGVLNSAASVYYYLRVIVYMYFKPGEEEFDWFNVTAPVALALVVSAAGSLIPGIIPSMILQFAQQAVKLI.

Transmembrane regions (helical) follow at residues 16–36, 45–65, 79–99, 111–131, 133–153, 168–188, 212–232, 257–276, 281–298, 306–326, 333–353, 378–398, 413–435, and 457–477; these read VIMP…VNVF, LAWL…TGWG, NFAI…VLIS, GELY…AAAT, LMTI…LAGF, FLLG…IYGV, LLIG…AAPF, AAGF…AMIA, LLWI…FTAL, MLAY…ASGT, ILFY…VIVL, ALAM…AGFI, IWLA…RVIV, and LALV…SMIL.

Belongs to the complex I subunit 2 family. NDH-1 is composed of 14 different subunits. Subunits NuoA, H, J, K, L, M, N constitute the membrane sector of the complex.

It is found in the cell inner membrane. It carries out the reaction a quinone + NADH + 5 H(+)(in) = a quinol + NAD(+) + 4 H(+)(out). Functionally, NDH-1 shuttles electrons from NADH, via FMN and iron-sulfur (Fe-S) centers, to quinones in the respiratory chain. The immediate electron acceptor for the enzyme in this species is believed to be ubiquinone. Couples the redox reaction to proton translocation (for every two electrons transferred, four hydrogen ions are translocated across the cytoplasmic membrane), and thus conserves the redox energy in a proton gradient. This Trichlorobacter lovleyi (strain ATCC BAA-1151 / DSM 17278 / SZ) (Geobacter lovleyi) protein is NADH-quinone oxidoreductase subunit N.